We begin with the raw amino-acid sequence, 325 residues long: Putative gluconeogenesis factor (325 aa).

Belongs to the gluconeogenesis factor family.

The protein resides in the cytoplasm. Functionally, required for morphogenesis under gluconeogenic growth conditions. The polypeptide is Putative gluconeogenesis factor (Streptococcus pyogenes serotype M1).